The primary structure comprises 1414 residues: DNA-directed RNA polymerase subunit beta' (1414 aa).

Residues Cys70, Cys72, Cys85, and Cys88 each contribute to the Zn(2+) site. Positions 460, 462, and 464 each coordinate Mg(2+). Residues Cys819, Cys893, Cys900, and Cys903 each contribute to the Zn(2+) site. Positions 1391-1414 are disordered; it reads AEEAFDFGTPSAPAEEPQQHPAAE. A compositionally biased stretch (low complexity) spans 1400–1414; it reads PSAPAEEPQQHPAAE.

This sequence belongs to the RNA polymerase beta' chain family. As to quaternary structure, the RNAP catalytic core consists of 2 alpha, 1 beta, 1 beta' and 1 omega subunit. When a sigma factor is associated with the core the holoenzyme is formed, which can initiate transcription. Mg(2+) serves as cofactor. It depends on Zn(2+) as a cofactor.

It catalyses the reaction RNA(n) + a ribonucleoside 5'-triphosphate = RNA(n+1) + diphosphate. Its function is as follows. DNA-dependent RNA polymerase catalyzes the transcription of DNA into RNA using the four ribonucleoside triphosphates as substrates. This chain is DNA-directed RNA polymerase subunit beta', found in Burkholderia lata (strain ATCC 17760 / DSM 23089 / LMG 22485 / NCIMB 9086 / R18194 / 383).